The sequence spans 213 residues: Urease accessory protein UreE (213 aa).

The disordered stretch occupies residues 170-213; the sequence is EHHGRSHSHSHSHSHDHDHDHDHDHDHDHQHGPSCSHGHGHGHR. Residues 182–200 are compositionally biased toward basic and acidic residues; sequence HSHDHDHDHDHDHDHDHQH.

Belongs to the UreE family.

It localises to the cytoplasm. Involved in urease metallocenter assembly. Binds nickel. Probably functions as a nickel donor during metallocenter assembly. The protein is Urease accessory protein UreE of Burkholderia thailandensis (strain ATCC 700388 / DSM 13276 / CCUG 48851 / CIP 106301 / E264).